A 92-amino-acid polypeptide reads, in one-letter code: Phospholemman (92 aa).

The first 20 residues, 1–20 (MAYLHHTLLVCMGLLAMANA), serve as a signal peptide directing secretion. Residues 22-35 (APQEQDPFTYDYQS) lie on the Extracellular side of the membrane. The chain crosses the membrane as a helical span at residues 36 to 56 (LRIGGLIIAGILFILGILIIL). Topologically, residues 57-92 (KRGAWERFDTARRTGEPDEEEGTFRSSIRRLSTRRR) are cytoplasmic. Residues 67–92 (ARRTGEPDEEEGTFRSSIRRLSTRRR) form a disordered region. Phosphothreonine is present on T79. S82 bears the Phosphoserine mark. Phosphoserine; by PKA and PKC is present on S83. Residues 83–92 (SIRRLSTRRR) are compositionally biased toward basic residues. At S88 the chain carries Phosphoserine; by PKA. T89 is subject to Phosphothreonine; by PKC.

Belongs to the FXYD family. As to quaternary structure, homotetramer. Monomer. Regulatory subunit of the sodium/potassium-transporting ATPase (NKA) which is composed of a catalytic alpha subunit, a non-catalytic beta subunit and an additional regulatory subunit. The monomeric form associates with NKA while the oligomeric form does not. Interacts with the catalytic alpha-1 subunit ATP1A1. Also interacts with the catalytic alpha-2 and alpha-3 subunits ATP1A2 and ATP1A3. Very little interaction with ATP1A1, ATP1A2 or ATP1A3 when phosphorylated at Ser-83. Interacts with the non-catalytic beta-1 subunit ATP1B1. Oxidative stress decreases interaction with ATP1A1 but increases interaction with ATP1B1. Major plasma membrane substrate for cAMP-dependent protein kinase (PKA) and protein kinase C (PKC) in several different tissues. Phosphorylated in response to insulin and adrenergic stimulation. Phosphorylation at Ser-88 stimulates sodium/potassium-transporting ATPase activity while the unphosphorylated form inhibits sodium/potassium-transporting ATPase activity. Phosphorylation increases tetramerization, decreases binding to ATP1A1 and reduces inhibition of ATP1A1 activity. Phosphorylation at Ser-83 leads to greatly reduced interaction with ATP1A1, ATP1A2 and ATP1A3. May be phosphorylated by DMPK. Post-translationally, palmitoylation increases half-life and stability and is enhanced upon phosphorylation at Ser-88 by PKA. In terms of processing, glutathionylated. Expressed in ventricular myocytes (at protein level).

The protein localises to the cell membrane. The protein resides in the sarcolemma. It is found in the apical cell membrane. Its subcellular location is the membrane. It localises to the caveola. The protein localises to the T-tubule. Its function is as follows. Associates with and regulates the activity of the sodium/potassium-transporting ATPase (NKA) which transports Na(+) out of the cell and K(+) into the cell. Inhibits NKA activity in its unphosphorylated state and stimulates activity when phosphorylated. Reduces glutathionylation of the NKA beta-1 subunit ATP1B1, thus reversing glutathionylation-mediated inhibition of ATP1B1. Contributes to female sexual development by maintaining the excitability of neurons which secrete gonadotropin-releasing hormone. This chain is Phospholemman, found in Oryctolagus cuniculus (Rabbit).